Consider the following 166-residue polypeptide: PTS system glucose-specific EIIA component (166 aa).

Residues 34–138 (DPVFAQKMMG…SIISPIIITN (105 aa)) form the PTS EIIA type-1 domain. H71 and H86 together coordinate Zn(2+). The Tele-phosphohistidine intermediate; for EIIA activity role is filled by H86. The residue at position 86 (H86) is a Phosphohistidine; by HPr.

In terms of assembly, heterodimer with glycerol kinase (glpk). Zn(2+) serves as cofactor.

It is found in the cytoplasm. Functionally, the phosphoenolpyruvate-dependent sugar phosphotransferase system (sugar PTS), a major carbohydrate active transport system, catalyzes the phosphorylation of incoming sugar substrates concomitantly with their translocation across the cell membrane. The enzyme II complex composed of PtsG and Crr is involved in glucose transport. The chain is PTS system glucose-specific EIIA component (crr) from Staphylococcus epidermidis (strain ATCC 35984 / DSM 28319 / BCRC 17069 / CCUG 31568 / BM 3577 / RP62A).